The sequence spans 344 residues: MLISGANPTHVSAALKRYDVEKLAVATVASHTALQILRGAKRFGFRTIAVAGRADAAEFYRQFGFIDEVWTADFRNFVKTAEKLVEANAVLVPHGSYVEYVGWRQALEAPVPTLGCRELIRWEADQYKKMELLQRAGVPTPRVYKTPEEVDRPVIVKLFGAKGGRGYFLARDREELRRRLAGLGEYIIQEYVFGVPAYYHFFSSPVYGRVEVFGADIRYESNVDGRTFGWVEPTFVVVGNLPLVLRESLLPTIWKYGVQFAKAVEEAVGCRLAGPYCLESIIRDDMSISVFEFSGRIVAGTNIYMGYGSPYSVLYFDRPMDMGERIAHEIREAARRGRLEDLFT.

Residues H31 and S96 each contribute to the 5-amino-1-(5-phospho-beta-D-ribosyl)imidazole-4-carboxamide site. The 195-residue stretch at 130–324 (MELLQRAGVP…YFDRPMDMGE (195 aa)) folds into the ATP-grasp domain. Residues 153–198 (PVIV…VPAY) and E220 contribute to the ATP site. N240 is a 5-amino-1-(5-phospho-beta-D-ribosyl)imidazole-4-carboxamide binding site. Positions 279 and 292 each coordinate Mg(2+).

The protein belongs to the phosphohexose mutase family. It depends on Mg(2+) as a cofactor. Mn(2+) is required as a cofactor.

It carries out the reaction 5-amino-1-(5-phospho-beta-D-ribosyl)imidazole-4-carboxamide + formate + ATP = 5-formamido-1-(5-phospho-D-ribosyl)imidazole-4-carboxamide + ADP + phosphate. It functions in the pathway purine metabolism; IMP biosynthesis via de novo pathway; 5-formamido-1-(5-phospho-D-ribosyl)imidazole-4-carboxamide from 5-amino-1-(5-phospho-D-ribosyl)imidazole-4-carboxamide (formate route): step 1/1. In terms of biological role, catalyzes the ATP- and formate-dependent formylation of 5-aminoimidazole-4-carboxamide-1-beta-d-ribofuranosyl 5'-monophosphate (AICAR) to 5-formaminoimidazole-4-carboxamide-1-beta-d-ribofuranosyl 5'-monophosphate (FAICAR) in the absence of folates. This is 5-formaminoimidazole-4-carboxamide-1-(beta)-D-ribofuranosyl 5'-monophosphate synthetase from Pyrobaculum neutrophilum (strain DSM 2338 / JCM 9278 / NBRC 100436 / V24Sta) (Thermoproteus neutrophilus).